A 582-amino-acid polypeptide reads, in one-letter code: Ubiquilin-1 (582 aa).

Disordered stretches follow at residues 1–26 (MAES…AEPK) and 102–136 (RPQD…AANS). The residue at position 2 (Ala2) is an N-acetylalanine. In terms of domain architecture, Ubiquitin-like spans 28–102 (MKVTVKTPKE…VHLVIKTQNR (75 aa)). The segment covering 102–135 (RPQDNSAQQTNTTGNSVTSSPAPDSNPTSGPAAN) has biased composition (polar residues). The segment at 169–422 (QLLSNPEMMV…LNNPLFAGNP (254 aa)) is interaction with UBXN4. STI1 domains follow at residues 173-201 (NPEM…QLIM) and 203-242 (NPQM…MQEM). Residues 285-365 (NPFASLVSSP…NLVPGAGASM (81 aa)) form a disordered region. The segment covering 290–304 (LVSSPSSAEGTQPSR) has biased composition (polar residues). The span at 318-346 (QTPQSSPASGSTGSTTNTVSTSAGNATST) shows a compositional bias: low complexity. STI1 domains lie at 381–428 (NPQL…QEQM) and 432–464 (LPTF…QQGL). The tract at residues 481–513 (GLAAGNSGGPAGTTAPSTAPGEDTNPQGGAAEP) is disordered. The 41-residue stretch at 539-579 (RFQQQLEQLSAMGFLNREANLQALIATGGDINAAIERLLGS) folds into the UBA domain.

In terms of assembly, monomer and homodimer. Heterodimer with UBQLN2. Binds CD47. Binds NBL1. Binds GABRA1, GABRA2, GABRA3, GABRA6, GABRB1, GABRB2 and GABRB3. Binds UBE3A, BTRC, P4HB and MTOR. Interacts with the proteasome 19S subunit. Interacts (via ubiquitin-like domain) with TREX1; the interaction is direct and may control TREX1 subcellular location. Forms a complex with UBXN4 and VCP. Interacts (via UBA domain) with UBQLN4 (via ubiquitin-like domain). Found in a complex with UBQLN2 and MAP1LC3A/B/C. The monomeric form interacts with PSEN1 and PSEN2. Interacts with ORAI1. Interacts (via UBA domain) with TICAM1. Interacts with EPS15. Interacts (via UBA domain) with UBA52 and (via ubiquitin-like domain) with PSMD3 and PSMD4. Interacts with HERPUD1. Interacts with MAP1LC3A/B/C in the presence of UBQLN4. Interacts (via ubiquitin-like domain) with EPS15 (via UIM domains) and both the ubiquitinated and non-ubiquitinated forms can interact with EPS15. Interacts (via ubiquitin-like domain) with EPS15L1, HGS (via UIM domain) and STAM2 (via UIM domain). Interacts with BCL2L10/BCL-B; in the cytoplasm. Degraded during both macroautophagy and during chaperone-mediated autophagy (CMA). In terms of processing, phosphorylated. Post-translationally, ubiquitinated.

It localises to the nucleus. It is found in the cytoplasm. Its subcellular location is the endoplasmic reticulum. The protein localises to the cytoplasmic vesicle. The protein resides in the autophagosome. It localises to the cell membrane. In terms of biological role, plays an important role in the regulation of different protein degradation mechanisms and pathways including ubiquitin-proteasome system (UPS), autophagy and endoplasmic reticulum-associated protein degradation (ERAD) pathway. Mediates the proteasomal targeting of misfolded or accumulated proteins for degradation by binding (via UBA domain) to their polyubiquitin chains and by interacting (via ubiquitin-like domain) with the subunits of the proteasome. Plays a role in the ERAD pathway via its interaction with ER-localized proteins UBXN4, VCP and HERPUD1 and may form a link between the polyubiquitinated ERAD substrates and the proteasome. Plays a role in unfolded protein response (UPR) by attenuating the induction of UPR-inducible genes, DDTI3/CHOP, HSPA5 and PDIA2 during ER stress. Involved in the regulation of macroautophagy and autophagosome formation; required for maturation of autophagy-related protein LC3 from the cytosolic form LC3-I to the membrane-bound form LC3-II and may assist in the maturation of autophagosomes to autolysosomes by mediating autophagosome-lysosome fusion. Negatively regulates the TICAM1/TRIF-dependent toll-like receptor signaling pathway by decreasing the abundance of TICAM1 via the autophagic pathway. Promotes the ubiquitination and lysosomal degradation of ORAI1, consequently down-regulating the ORAI1-mediated Ca2+ mobilization. Suppresses the maturation and proteasomal degradation of amyloid beta A4 protein (A4) by stimulating the lysine 63 (K63)-linked polyubiquitination. Delays the maturation of A4 by sequestering it in the Golgi apparatus and preventing its transport to the cell surface for subsequent processing. Promotes the surface expression of GABA-A receptors. Ubiquitinates BCL2L10 and thereby stabilizes protein abundance. In Rattus norvegicus (Rat), this protein is Ubiquilin-1 (Ubqln1).